A 240-amino-acid chain; its full sequence is Lipoprotein-releasing system ATP-binding protein LolD (240 aa).

The region spanning 15–240 is the ABC transporter domain; that stretch reads IRAERLGKTY…GLRELTSAEV (226 aa). An ATP-binding site is contributed by 51–58; it reads GASGAGKS.

It belongs to the ABC transporter superfamily. Lipoprotein translocase (TC 3.A.1.125) family. In terms of assembly, the complex is composed of two ATP-binding proteins (LolD) and two transmembrane proteins (LolC and LolE).

It localises to the cell inner membrane. Functionally, part of the ABC transporter complex LolCDE involved in the translocation of mature outer membrane-directed lipoproteins, from the inner membrane to the periplasmic chaperone, LolA. Responsible for the formation of the LolA-lipoprotein complex in an ATP-dependent manner. The chain is Lipoprotein-releasing system ATP-binding protein LolD from Xylella fastidiosa (strain 9a5c).